Reading from the N-terminus, the 544-residue chain is Chaperonin GroEL (544 aa).

Residues 30 to 33, lysine 51, 87 to 91, glycine 415, and aspartate 495 each bind ATP; these read TLGP and DGTTT.

Belongs to the chaperonin (HSP60) family. Forms a cylinder of 14 subunits composed of two heptameric rings stacked back-to-back. Interacts with the co-chaperonin GroES.

The protein localises to the cell outer membrane. It catalyses the reaction ATP + H2O + a folded polypeptide = ADP + phosphate + an unfolded polypeptide.. Functionally, together with its co-chaperonin GroES, plays an essential role in assisting protein folding. The GroEL-GroES system forms a nano-cage that allows encapsulation of the non-native substrate proteins and provides a physical environment optimized to promote and accelerate protein folding. The polypeptide is Chaperonin GroEL (Neisseria gonorrhoeae).